Consider the following 223-residue polypeptide: Ribose-5-phosphate isomerase A (223 aa).

Residues 26–29, 82–85, and 95–98 each bind substrate; these read TGST, DGAD, and KGGG. Glutamate 104 acts as the Proton acceptor in catalysis. Lysine 122 is a binding site for substrate.

The protein belongs to the ribose 5-phosphate isomerase family. Homodimer.

It catalyses the reaction aldehydo-D-ribose 5-phosphate = D-ribulose 5-phosphate. It functions in the pathway carbohydrate degradation; pentose phosphate pathway; D-ribose 5-phosphate from D-ribulose 5-phosphate (non-oxidative stage): step 1/1. In terms of biological role, catalyzes the reversible conversion of ribose-5-phosphate to ribulose 5-phosphate. The protein is Ribose-5-phosphate isomerase A of Streptococcus agalactiae serotype Ia (strain ATCC 27591 / A909 / CDC SS700).